The chain runs to 377 residues: Chorismate synthase (377 aa).

Arg47 is a binding site for NADP(+). FMN is bound by residues 124–126, 252–253, Gly296, 311–315, and Arg338; these read RSS, NS, and KPTPS.

The protein belongs to the chorismate synthase family. FMNH2 serves as cofactor.

It carries out the reaction 5-O-(1-carboxyvinyl)-3-phosphoshikimate = chorismate + phosphate. The protein operates within metabolic intermediate biosynthesis; chorismate biosynthesis; chorismate from D-erythrose 4-phosphate and phosphoenolpyruvate: step 7/7. Catalyzes the anti-1,4-elimination of the C-3 phosphate and the C-6 proR hydrogen from 5-enolpyruvylshikimate-3-phosphate (EPSP) to yield chorismate, which is the branch point compound that serves as the starting substrate for the three terminal pathways of aromatic amino acid biosynthesis. This reaction introduces a second double bond into the aromatic ring system. In Methanococcus vannielii (strain ATCC 35089 / DSM 1224 / JCM 13029 / OCM 148 / SB), this protein is Chorismate synthase.